The sequence spans 211 residues: Endo-1,4-beta-xylanase 3 (211 aa).

The signal sequence occupies residues 1 to 27 (MKVTAAFAGLLVTAFAAPVPEPVLVSR). The GH11 domain occupies 28-210 (SAGINYVQNY…GAGSASVTIS (183 aa)). The active-site Nucleophile is the Glu-106. Cys-119 and Cys-138 are joined by a disulfide. Catalysis depends on Glu-197, which acts as the Proton donor.

It belongs to the glycosyl hydrolase 11 (cellulase G) family.

The protein resides in the secreted. The enzyme catalyses Endohydrolysis of (1-&gt;4)-beta-D-xylosidic linkages in xylans.. Its pathway is glycan degradation; xylan degradation. This is Endo-1,4-beta-xylanase 3 (xynC) from Aspergillus kawachii (strain NBRC 4308) (White koji mold).